Here is a 647-residue protein sequence, read N- to C-terminus: MIKITFPDGAVREFESGVTTFDIAESISKSLAKKALAGKFNDQLIDTTRAIEEDGSIEIVTPDHKDAYEVLRHSAAHLFAQAAKRLFPNLHLGVGPAIAEGFYYDTDNAEGQISNEDLPRIEAEMQKIVTENYPCIREEVTKEEALELFKDDPYKVELINEHAGAGLTVYRQGEFVDLCRGPHVPSTGRIQVFHLLNVAGAYWRGNSDNNMMQRIYGTAWFDKKDLKAYLTRLEEAKERDHRKLGKELDLFMISQEVGQGLPFWLPDGATIRRTLERYITDKELASGYQHVYTPPLASVELYKTSGHWDHYQEDMFPVMDMGDGEEFVLRPMNCPHHIQVYKNHVRSYRELPIRIAELGMMHRYEKSGALSGLQRVREMTLNDGHIFVTPEQIQEEFRRALQLIIDVYADFNLTDYRFRLSYRDPNDTHKYYDNDEMWENAQSMLKAALDEMGVDYFEAEGEAAFYGPKLDIQVKTALGNEETLSTIQLDFLLPERFDLKYIGADGEEHRPVMIHRGVISTMERFTAILIETYKGAFPTWLAPHQVTVIPISNEAHIDYAWEVAKTLRDRGVRADVDDRNEKMQYKIRASQTSKIPYQLIVGDKEMEDKSVNVRRYGSKATHTESVEEFVENILADIARKSRPDAQA.

The region spanning 1–61 is the TGS domain; sequence MIKITFPDGA…EEDGSIEIVT (61 aa). The interval 240–538 is catalytic; sequence DHRKLGKELD…LIETYKGAFP (299 aa). 3 residues coordinate Zn(2+): Cys-334, His-385, and His-515.

The protein belongs to the class-II aminoacyl-tRNA synthetase family. In terms of assembly, homodimer. Requires Zn(2+) as cofactor.

The protein localises to the cytoplasm. The catalysed reaction is tRNA(Thr) + L-threonine + ATP = L-threonyl-tRNA(Thr) + AMP + diphosphate + H(+). In terms of biological role, catalyzes the attachment of threonine to tRNA(Thr) in a two-step reaction: L-threonine is first activated by ATP to form Thr-AMP and then transferred to the acceptor end of tRNA(Thr). Also edits incorrectly charged L-seryl-tRNA(Thr). The protein is Threonine--tRNA ligase of Streptococcus pyogenes serotype M4 (strain MGAS10750).